Reading from the N-terminus, the 1020-residue chain is LLGL scribble cell polarity complex component 2 (1020 aa).

WD repeat units follow at residues 36 to 69 (SALGYSPSLRILAIGTRSGAIKLYGAPGVEFMGL), 76 to 117 (VTQI…DESF), 132 to 169 (ITVVLPHSSCELLYLGTESGNVFVVQLPAFRALEDRTI), 193 to 227 (ALQEHPRDPNQILIGYSRGLVVIWDLQGSRVLYHF), 233 to 268 (LENIWWQRDGRLLVSCHSDGSYCQWPVSSEAQQPEP), 282 to 324 (AITR…GQQT), 332 to 366 (VIGFTVLTEADPAATFDDPYALVVLAEEELVVIDL), 388 to 464 (TCSH…YKLS), 508 to 583 (QKIF…FVLV), 592 to 653 (TSLA…LRQS), 713 to 769 (VRTL…KEIQ), 778 to 830 (GILV…VSAK), 835 to 888 (LTAL…VRYS), and 902 to 925 (VFTKYGQGFYLISPSEFERFSLST). Residue Ser653 is modified to Phosphoserine. The segment covering 653 to 669 (SFRRMRRSRVSSRKRHP) has biased composition (basic residues). Residues 653 to 689 (SFRRMRRSRVSSRKRHPAGPPGEAQEGSAKAERPGLQ) form a disordered region. Disordered stretches follow at residues 938–975 (AETKNHRPGNGAGPKKAPSRARNSGTQSDGEEKQPGLV) and 992–1020 (STLEGDRGSGNWRSHRAAVGCSLSNGGAE). 2 positions are modified to phosphoserine: Ser965 and Ser1015.

It belongs to the WD repeat L(2)GL family. Interacts with GPSM2/LGN, PRKCI/aPKC and PARD6B/Par-6. The complex is enhanced during mitosis. Interacts with DCAF1. In terms of processing, phosphorylated at Ser-653 by PRKCI. Phosphorylation is enhanced during cell polarization induced by calcium. Phosphorylation may occur during the cell-cell contact-induced cell polarization and may contribute to the segregation of LLGL2 from the PRKCI/aPKC and PARD6B/Par-6 complex.

The protein localises to the cytoplasm. Functionally, part of a complex with GPSM2/LGN, PRKCI/aPKC and PARD6B/Par-6, which may ensure the correct organization and orientation of bipolar spindles for normal cell division. This complex plays roles in the initial phase of the establishment of epithelial cell polarity. The protein is LLGL scribble cell polarity complex component 2 (LLGL2) of Homo sapiens (Human).